Consider the following 315-residue polypeptide: Porphobilinogen deaminase (315 aa).

Position 234 is an S-(dipyrrolylmethanemethyl)cysteine (Cys234).

The protein belongs to the HMBS family. Monomer. Dipyrromethane is required as a cofactor.

The enzyme catalyses 4 porphobilinogen + H2O = hydroxymethylbilane + 4 NH4(+). It participates in porphyrin-containing compound metabolism; protoporphyrin-IX biosynthesis; coproporphyrinogen-III from 5-aminolevulinate: step 2/4. Functionally, tetrapolymerization of the monopyrrole PBG into the hydroxymethylbilane pre-uroporphyrinogen in several discrete steps. This is Porphobilinogen deaminase from Mycobacterium avium (strain 104).